We begin with the raw amino-acid sequence, 427 residues long: Stabilizer of axonemal microtubules 4 (427 aa).

3 disordered regions span residues 82–105, 273–298, and 314–335; these read TSKSVTSQSYSPLEVPDGKQPLPW, RTLNPRVPTPAPQPASMSHRSYQPPQ, and GNKEPTGFTLNNPSYVRSSYEQ. Polar residues-rich tracts occupy residues 287-298 and 321-332; these read ASMSHRSYQPPQ and FTLNNPSYVRSS.

Microtubule inner protein component of sperm flagellar doublet microtubules. Interacts with PPP1CA.

It localises to the cell projection. The protein resides in the cilium. Its subcellular location is the cytoplasm. The protein localises to the cytoskeleton. It is found in the flagellum axoneme. The polypeptide is Stabilizer of axonemal microtubules 4 (Mus musculus (Mouse)).